The following is a 119-amino-acid chain: Immunoglobulin lambda variable 2-11 (119 aa).

The first 19 residues, Met1–Ala19, serve as a signal peptide directing secretion. Gln20 is subject to Pyrrolidone carboxylic acid. Residues Gln20 to Thr44 are framework-1. Residues Gln20–His119 form the Ig-like domain. The cysteines at positions 41 and 109 are disulfide-linked. Residues Ser45 to Tyr53 form a complementarity-determining-1 region. The interval Val54–Tyr70 is framework-2. Positions Asp71–Ser73 are complementarity-determining-2. The interval Lys74 to Cys109 is framework-3. A complementarity-determining-3 region spans residues Cys110–His119.

Immunoglobulins are composed of two identical heavy chains and two identical light chains; disulfide-linked.

The protein resides in the secreted. Its subcellular location is the cell membrane. In terms of biological role, v region of the variable domain of immunoglobulin light chains that participates in the antigen recognition. Immunoglobulins, also known as antibodies, are membrane-bound or secreted glycoproteins produced by B lymphocytes. In the recognition phase of humoral immunity, the membrane-bound immunoglobulins serve as receptors which, upon binding of a specific antigen, trigger the clonal expansion and differentiation of B lymphocytes into immunoglobulins-secreting plasma cells. Secreted immunoglobulins mediate the effector phase of humoral immunity, which results in the elimination of bound antigens. The antigen binding site is formed by the variable domain of one heavy chain, together with that of its associated light chain. Thus, each immunoglobulin has two antigen binding sites with remarkable affinity for a particular antigen. The variable domains are assembled by a process called V-(D)-J rearrangement and can then be subjected to somatic hypermutations which, after exposure to antigen and selection, allow affinity maturation for a particular antigen. The sequence is that of Immunoglobulin lambda variable 2-11 from Homo sapiens (Human).